A 323-amino-acid polypeptide reads, in one-letter code: Peridinin-chlorophyll a-binding protein 3 (323 aa).

2 consecutive repeat copies span residues 1–173 (DGIA…RYVP) and 174–323 (DGPV…SAVV).

In terms of assembly, homotrimer.

It localises to the plastid. The protein localises to the chloroplast. Its function is as follows. Water-soluble antenna for capture of solar energy in the blue-green range. Peridinin is an asymmetric carotenoid. The protein is Peridinin-chlorophyll a-binding protein 3 of Amphidinium carterae (Dinoflagellate).